The chain runs to 193 residues: Dense granule protein 2 (193 aa).

A glycan (N-linked (GlcNAc...) asparagine) is linked at asparagine 4. The chain crosses the membrane as a helical span at residues 14-34; it reads FSPLTVVMLAVTLVAFMGVPL. A glycan (N-linked (GlcNAc...) asparagine) is linked at asparagine 74. The tract at residues 75–140 is disordered; sequence SSELAGSRDK…APKPVPVRSA (66 aa). Over residues 88 to 98 the composition is skewed to acidic residues; it reads EAEEEAAEVET. A helical membrane pass occupies residues 153–173; that stretch reads HRVIGTAVIAAVVAALLWKFS. Positions 174 to 193 are disordered; the sequence is RRRSGAPREGGENENGGEEK.

Belongs to the Gra6 family.

It localises to the membrane. In Neospora caninum (Coccidian parasite), this protein is Dense granule protein 2 (DG2).